The sequence spans 466 residues: MEKSFDYDVIIIGTGPGGEGAAMNLAKRQKKVAIIERYHQVGGGCTHWGTIPSKALRQSVSRLIEYNSNPLFNQNEQVKQLTFQDILSHASAVIQKQVSLRSGFYNRNRVEHIQGQASFIDAHTISISHPDGSVEKISAKQIMIATGSRPYRPDDIDFDHPRVYDSDSILSLKHAPQHVIIYGAGVIGSEYASIFRGLGVKVDLINTRERLLSFLDTEMSDSLSYHLWNSGVVIRHGEEIERVESSEDAVIVHLKSGKKMRADCLLFANGRTGNTADLNLAAAGLKADGRGQLKVNDCYQTEVDNIFAVGDVIGYPSLASAAFDQGRIAASAMVDSSSKAKLIVDIPTGIYTIPEISSVGKTEQELTEAKIPYEVGRAQFKHLARAQISNNLVGSLKILFHRETKEILGIHCFGENAAEIIHIGQAIMQQTNGGNTIEYFVETTFNYPTMAEAFRVAALNGLNRLF.

Residue 36-45 (ERYHQVGGGC) coordinates FAD.

Belongs to the class-I pyridine nucleotide-disulfide oxidoreductase family. It depends on FAD as a cofactor.

Its subcellular location is the cytoplasm. The enzyme catalyses NAD(+) + NADPH = NADH + NADP(+). Conversion of NADPH, generated by peripheral catabolic pathways, to NADH, which can enter the respiratory chain for energy generation. This is Soluble pyridine nucleotide transhydrogenase from Colwellia psychrerythraea (strain 34H / ATCC BAA-681) (Vibrio psychroerythus).